The sequence spans 106 residues: MSYQLYRNTTLGNTLQESLDELIQYGQITPGLAFKVLLQFDKSINNALNQRVKARVTFKAGKLNTYRFCDNVWTLMLNDVEFREVHEIVKVDKVKIVACDGKSGEF.

This sequence belongs to the TFIIA subunit 2 family. In terms of assembly, TFIIA is a heterodimer of the large unprocessed subunit 1 and a small subunit gamma. It was originally believed to be a heterotrimer of an alpha (p30), a beta (p20) and a gamma (p14) subunit. Forms a complex with Moonshiner/CG12721 and Trf2. Ubiquitous.

The protein resides in the nucleus. TFIIA is a component of the transcription machinery of RNA polymerase II and plays an important role in transcriptional activation. TFIIA in a complex with TBP mediates transcriptional activity. Part of a rhi-dependent transcription machinery that enables the generation of piRNA precursors from heterochromatin while maintaining the suppression of transposon-encoded promoters and enhancers. Forms a complex with Moonshiner/CG12721 and Trf2 which recruit transcriptional machinery to heterochromatin to initiate the bidirectional transcription of piRNA clusters, by interacting with the RDC (rhi, del and cuff) complex that binds to repressive H3K9me3 marks in the chromatin. This mechanism allows transcription to occur in piRNA clusters despite the lack of proper promoter elements and in the presence of the repressive H3K9me3 mark. The chain is Transcription initiation factor IIA subunit 2 (TfIIA-S) from Drosophila melanogaster (Fruit fly).